The chain runs to 279 residues: MDTELLKTFLEVSRTRHFGRAAESLYLTQSAVSFRIRQLENQLGVNLFTRHRNNIRLTAAGEKLLPYAETLMSTWQAARKEVAHTSRHNEFSIGASASLWECMLNQWLGRLYQNQDAHTGLQFEARIAQRQSLVKQLHERQLDLLITTEAPKMDEFSSQLLGYFTLALYTSAPSKLKGDLNYLRLEWGPDFQQHEAGLIGADEVPILTTSSAELAQQQIAMLNGCTWLPVSWARKKGGLHTVVDSTTLSRPLYAIWLQNSDKNALIRDLLKINVLDEVY.

Residues 1–58 (MDTELLKTFLEVSRTRHFGRAAESLYLTQSAVSFRIRQLENQLGVNLFTRHRNNIRLT) form the HTH lysR-type domain. Residues 18–37 (FGRAAESLYLTQSAVSFRIR) constitute a DNA-binding region (H-T-H motif).

It belongs to the LysR transcriptional regulatory family.

Its function is as follows. Negatively regulates the transcription of the flagellar master operon flhDC by binding to the upstream region of the operon. The polypeptide is HTH-type transcriptional regulator HdfR (Escherichia coli (strain ATCC 8739 / DSM 1576 / NBRC 3972 / NCIMB 8545 / WDCM 00012 / Crooks)).